The following is a 299-amino-acid chain: Acetaldehyde dehydrogenase (299 aa).

S11 to I14 is a binding site for NAD(+). C126 acts as the Acyl-thioester intermediate in catalysis. NAD(+) is bound by residues S157–N165 and N267.

It belongs to the acetaldehyde dehydrogenase family.

It carries out the reaction acetaldehyde + NAD(+) + CoA = acetyl-CoA + NADH + H(+). The protein is Acetaldehyde dehydrogenase of Bacillus thuringiensis (strain Al Hakam).